The following is a 145-amino-acid chain: Probable DNA-directed RNA polymerases I and III subunit RPAC2 (145 aa).

The segment at 1-52 (MGKKSEKKVVEETMEVDEQPAVEPEAVPEEEPEVEDEDLNVPKKKKMEILDP) is disordered. Positions 12–39 (ETMEVDEQPAVEPEAVPEEEPEVEDEDL) are enriched in acidic residues.

It belongs to the archaeal Rpo11/eukaryotic RPB11/RPC19 RNA polymerase subunit family. In terms of assembly, component of the RNA polymerase I (Pol I) and RNA polymerase III (Pol III) complexes consisting of at least 13 and 17 subunits, respectively.

It is found in the nucleus. Its function is as follows. DNA-dependent RNA polymerase catalyzes the transcription of DNA into RNA using the four ribonucleoside triphosphates as substrates. Common core component of RNA polymerases I and III which synthesize ribosomal RNA precursors and small RNAs, such as 5S rRNA and tRNAs, respectively. The sequence is that of Probable DNA-directed RNA polymerases I and III subunit RPAC2 (rpac-19) from Caenorhabditis briggsae.